The following is a 100-amino-acid chain: Omega-hexatoxin-Asp2a (100 aa).

A signal peptide spans 1–23 (MKFSKLSITLAVILTQAVFVLCG). The propeptide occupies 24–55 (MKNEDFMEKGLESNELHDAIKKPVNSGKPDTE). 3 disulfides stabilise this stretch: C60–C73, C66–C79, and C72–C84.

Belongs to the neurotoxin 15 family. 02 (omega-actx) subfamily. In terms of tissue distribution, expressed by the venom gland.

The protein localises to the secreted. Functionally, potent inhibitor of insect, but not mammalian, voltage-gated calcium channels (Cav). The protein is Omega-hexatoxin-Asp2a of Atrax sp. (strain Illawarra) (Funnel-web spider).